The sequence spans 744 residues: Scytalone dehydratase-like protein Arp1 (744 aa).

Tyr-621 contributes to the substrate binding site. Active-site residues include His-656 and His-681. Position 702 (Asn-702) interacts with substrate.

It belongs to the scytalone dehydratase family. In terms of assembly, homotrimer. Each subunit contains an active site, located in the central part of the hydrophobic core of the monomer, which functions independently.

Scytalone dehydratase-like protein; part of the Pks2 gene cluster that mediates the formation of infectious structures (appressoria), enabling these fungi to kill insects faster. The product of the Pks2 gene cluster is different from the one of Pks1 and has still not been identified. This Metarhizium brunneum (strain ARSEF 3297) protein is Scytalone dehydratase-like protein Arp1.